The chain runs to 235 residues: Large ribosomal subunit protein uL1 (235 aa).

It belongs to the universal ribosomal protein uL1 family. Part of the 50S ribosomal subunit.

In terms of biological role, binds directly to 23S rRNA. The L1 stalk is quite mobile in the ribosome, and is involved in E site tRNA release. Protein L1 is also a translational repressor protein, it controls the translation of the L11 operon by binding to its mRNA. This is Large ribosomal subunit protein uL1 from Mycolicibacterium smegmatis (strain ATCC 700084 / mc(2)155) (Mycobacterium smegmatis).